Consider the following 466-residue polypeptide: DNA polymerase delta subunit 3 (466 aa).

An N-acetylalanine modification is found at Ala-2. Disordered regions lie at residues 169–188 (NNEL…VSQQ) and 199–232 (KAAA…PGKG). Basic and acidic residues predominate over residues 206–217 (ETNKETKTEAKE). Lys-258 participates in a covalent cross-link: Glycyl lysine isopeptide (Lys-Gly) (interchain with G-Cter in SUMO); alternate. Lys-258 is covalently cross-linked (Glycyl lysine isopeptide (Lys-Gly) (interchain with G-Cter in SUMO2); alternate). Lys-261 participates in a covalent cross-link: Glycyl lysine isopeptide (Lys-Gly) (interchain with G-Cter in SUMO2). Disordered stretches follow at residues 274-393 (KLAT…KTYL) and 406-466 (ESES…FQRK). A Phosphothreonine modification is found at Thr-277. Over residues 286 to 296 (KKAEPVKVLQK) the composition is skewed to basic and acidic residues. Ser-307 is modified (phosphoserine). Positions 349-361 (PSPPPPPSPPLEP) are enriched in pro residues. Residues Ser-407 and Ser-409 each carry the phosphoserine modification. A Phosphothreonine modification is found at Thr-411. Phosphoserine is present on Ser-413. Over residues 432–441 (VKKEPREERK) the composition is skewed to basic and acidic residues. A Glycyl lysine isopeptide (Lys-Gly) (interchain with G-Cter in SUMO); alternate cross-link involves residue Lys-433. A Glycyl lysine isopeptide (Lys-Gly) (interchain with G-Cter in SUMO2); alternate cross-link involves residue Lys-433. Polar residues predominate over residues 455 to 466 (RQVSITGFFQRK). The PIP-box signature appears at 456-463 (QVSITGFF). Ser-458 is modified (phosphoserine).

As to quaternary structure, component of both the DNA polymerase delta and DNA polymerase zeta complexes. The tetrameric DNA polymerase delta complex (Pol-delta4), which consists of POLD1/p125, POLD2/p50, POLD3/p66/p68 and POLD4/p12, with POLD1 bearing DNA polymerase and 3' to 5' proofreading exonuclease activities. Within this complex, directly interacts with POLD2. Following stress caused by DNA damaging agents or by replication stress, POLD4 is degraded and Pol-delta4 is converted into a trimeric form of the complex (Pol-delta3), which consists of POLD1, POLD2 and POLD3. Pol-delta3 is the major form occurring at S phase replication sites, as well as DNA damage sites. Directly interacts with PCNA, as do POLD1 and POLD4; this interaction stimulates Pol-delta polymerase activity. POLD3 phosphorylation at Ser-458 impairs PCNA binding. Component of the DNA polymerase zeta complex (POLZ), which consists of REV3L, MAD2L2, POLD2 and POLD3, with REV3L bearing DNA polymerase catalytic activity. The DNA polymerase delta complex interacts with POLDIP2; this interaction is probably mediated through direct binding to POLD2. Post-translationally, ubiquitinated, but not targeted to the proteasome. Sumoylated. Sumoylation with SUMO3 may be predominant. In terms of processing, phosphorylation at Ser-458 is catalyzed in vitro by PKA. It is thought to decrease the affinity for PCNA and Pol-delta4 processivity. Can also be phosphorylated in vitro by CDK1-cyclin-A complex, as well as CDK2-cyclin-A and CDK2-cyclin-E complexes. PCNA interferes with CDK-cyclin phosphorylation.

It is found in the cytoplasm. It localises to the nucleus. Its function is as follows. Accessory component of both the DNA polymerase delta complex and the DNA polymerase zeta complex. As a component of the trimeric and tetrameric DNA polymerase delta complexes (Pol-delta3 and Pol-delta4, respectively), plays a role in high fidelity genome replication, including in lagging strand synthesis, and repair. Required for optimal Pol-delta activity. Stabilizes the Pol-delta complex and plays a major role in Pol-delta stimulation by PCNA. Pol-delta3 and Pol-delta4 are characterized by the absence or the presence of POLD4. They exhibit differences in catalytic activity. Most notably, Pol-delta3 shows higher proofreading activity than Pol-delta4. Although both Pol-delta3 and Pol-delta4 process Okazaki fragments in vitro, Pol-delta3 may also be better suited to fulfill this task, exhibiting near-absence of strand displacement activity compared to Pol-delta4 and stalling on encounter with the 5'-blocking oligonucleotides. Pol-delta3 idling process may avoid the formation of a gap, while maintaining a nick that can be readily ligated. Along with DNA polymerase kappa, DNA polymerase delta carries out approximately half of nucleotide excision repair (NER) synthesis following UV irradiation. In this context, POLD3, along with PCNA and RFC1-replication factor C complex, is required to recruit POLD1, the catalytic subunit of the polymerase delta complex, to DNA damage sites. Under conditions of DNA replication stress, required for the repair of broken replication forks through break-induced replication (BIR). Involved in the translesion synthesis (TLS) of templates carrying O6-methylguanine or abasic sites performed by Pol-delta4, independently of DNA polymerase zeta (REV3L) or eta (POLH). Facilitates abasic site bypass by DNA polymerase delta by promoting extension from the nucleotide inserted opposite the lesion. Also involved in TLS, as a component of the tetrameric DNA polymerase zeta complex. Along with POLD2, dramatically increases the efficiency and processivity of DNA synthesis of the DNA polymerase zeta complex compared to the minimal zeta complex, consisting of only REV3L and REV7. The polypeptide is DNA polymerase delta subunit 3 (POLD3) (Homo sapiens (Human)).